Reading from the N-terminus, the 299-residue chain is Maintenance of mitochondrial morphology protein 1 (299 aa).

The Lumenal segment spans residues 1–15 (MTNIIFSLQPTFTQG). Residues 16-36 (LILGQLSVLVLLGLILKYLFL) form a helical membrane-spanning segment. Residues 37–299 (DSTKNPFETT…QEESKRQEEA (263 aa)) lie on the Cytoplasmic side of the membrane. The segment at 47–68 (SYHPQFDRKPARKQQAQDSQSQ) is disordered. Residues 73–281 (DVESLDWFNL…LPGLASVAEA (209 aa)) enclose the SMP-LTD domain.

It belongs to the MMM1 family. As to quaternary structure, homodimer. Component of the ER-mitochondria encounter structure (ERMES) or MDM complex, composed of MMM1, MDM10, MDM12 and MDM34. An MMM1 homodimer associates with one molecule of MDM12 on each side in a pairwise head-to-tail manner, and the SMP-LTD domains of MMM1 and MDM12 generate a continuous hydrophobic tunnel for phospholipid trafficking.

The protein resides in the endoplasmic reticulum membrane. Functionally, component of the ERMES/MDM complex, which serves as a molecular tether to connect the endoplasmic reticulum (ER) and mitochondria. Components of this complex are involved in the control of mitochondrial shape and protein biogenesis, and function in nonvesicular lipid trafficking between the ER and mitochondria. The MDM12-MMM1 subcomplex functions in the major beta-barrel assembly pathway that is responsible for biogenesis of all outer membrane beta-barrel proteins, and acts in a late step after the SAM complex. The MDM10-MDM12-MMM1 subcomplex further acts in the TOM40-specific pathway after the action of the MDM12-MMM1 complex. Essential for establishing and maintaining the structure of mitochondria and maintenance of mtDNA nucleoids. The protein is Maintenance of mitochondrial morphology protein 1 of Coprinopsis cinerea (strain Okayama-7 / 130 / ATCC MYA-4618 / FGSC 9003) (Inky cap fungus).